The following is a 114-amino-acid chain: Probable non-functional T cell receptor beta variable 6-7 (114 aa).

An N-terminal signal peptide occupies residues 1–21; sequence MSLGLLCCVAFSLLWAGPMNA. Residues 22 to 114 enclose the Ig-like domain; sequence GVTQTPKFHV…TSVYFCASSY (93 aa). Residues cysteine 42 and cysteine 110 are joined by a disulfide bond. A glycan (N-linked (GlcNAc...) asparagine) is linked at asparagine 84.

In terms of assembly, alpha-beta TR is a heterodimer composed of an alpha and beta chain; disulfide-linked. The alpha-beta TR is associated with the transmembrane signaling CD3 coreceptor proteins to form the TR-CD3 (TcR or TCR). The assembly of alpha-beta TR heterodimers with CD3 occurs in the endoplasmic reticulum where a single alpha-beta TR heterodimer associates with one CD3D-CD3E heterodimer, one CD3G-CD3E heterodimer and one CD247 homodimer forming a stable octameric structure. CD3D-CD3E and CD3G-CD3E heterodimers preferentially associate with TR alpha and TR beta chains, respectively. The association of the CD247 homodimer is the last step of TcR assembly in the endoplasmic reticulum and is required for transport to the cell surface.

It is found in the cell membrane. Probable non-functional open reading frame (ORF) of V region of the variable domain of T cell receptor (TR) beta chain. Non-functional ORF generally cannot participate in the synthesis of a productive T cell receptor (TR) chain due to altered V-(D)-J or switch recombination and/or splicing site (at mRNA level) and/or conserved amino acid change (protein level). Alpha-beta T cell receptors are antigen specific receptors which are essential to the immune response and are present on the cell surface of T lymphocytes. Recognize peptide-major histocompatibility (MH) (pMH) complexes that are displayed by antigen presenting cells (APC), a prerequisite for efficient T cell adaptive immunity against pathogens. Binding of alpha-beta TR to pMH complex initiates TR-CD3 clustering on the cell surface and intracellular activation of LCK that phosphorylates the ITAM motifs of CD3G, CD3D, CD3E and CD247 enabling the recruitment of ZAP70. In turn ZAP70 phosphorylates LAT, which recruits numerous signaling molecules to form the LAT signalosome. The LAT signalosome propagates signal branching to three major signaling pathways, the calcium, the mitogen-activated protein kinase (MAPK) kinase and the nuclear factor NF-kappa-B (NF-kB) pathways, leading to the mobilization of transcription factors that are critical for gene expression and essential for T cell growth and differentiation. The T cell repertoire is generated in the thymus, by V-(D)-J rearrangement. This repertoire is then shaped by intrathymic selection events to generate a peripheral T cell pool of self-MH restricted, non-autoaggressive T cells. Post-thymic interaction of alpha-beta TR with the pMH complexes shapes TR structural and functional avidity. In Homo sapiens (Human), this protein is Probable non-functional T cell receptor beta variable 6-7.